Consider the following 56-residue polypeptide: Large ribosomal subunit protein bL32 (56 aa).

Positions 1-26 (MAVQQNKPTRSKRGMRRSHDSLTTAA) are disordered.

The protein belongs to the bacterial ribosomal protein bL32 family.

The sequence is that of Large ribosomal subunit protein bL32 from Erwinia tasmaniensis (strain DSM 17950 / CFBP 7177 / CIP 109463 / NCPPB 4357 / Et1/99).